Consider the following 529-residue polypeptide: Bifunctional purine biosynthesis protein PurH (529 aa).

The MGS-like domain occupies 2–149; the sequence is TDLHPVRRAL…KNHAFVNVVV (148 aa).

Belongs to the PurH family.

The enzyme catalyses (6R)-10-formyltetrahydrofolate + 5-amino-1-(5-phospho-beta-D-ribosyl)imidazole-4-carboxamide = 5-formamido-1-(5-phospho-D-ribosyl)imidazole-4-carboxamide + (6S)-5,6,7,8-tetrahydrofolate. It carries out the reaction IMP + H2O = 5-formamido-1-(5-phospho-D-ribosyl)imidazole-4-carboxamide. Its pathway is purine metabolism; IMP biosynthesis via de novo pathway; 5-formamido-1-(5-phospho-D-ribosyl)imidazole-4-carboxamide from 5-amino-1-(5-phospho-D-ribosyl)imidazole-4-carboxamide (10-formyl THF route): step 1/1. It participates in purine metabolism; IMP biosynthesis via de novo pathway; IMP from 5-formamido-1-(5-phospho-D-ribosyl)imidazole-4-carboxamide: step 1/1. The sequence is that of Bifunctional purine biosynthesis protein PurH from Ruegeria sp. (strain TM1040) (Silicibacter sp.).